The sequence spans 85 residues: MASPVSPFAWIALIPIYFYRWFISPLIGPRCRFTPTCSLYAIEALKAHGFVKGCWLSGKRLLKCHPLNEGGFDPVPPVQKQDRDK.

It belongs to the UPF0161 family.

Its subcellular location is the cell inner membrane. In terms of biological role, could be involved in insertion of integral membrane proteins into the membrane. In Vibrio atlanticus (strain LGP32) (Vibrio splendidus (strain Mel32)), this protein is Putative membrane protein insertion efficiency factor.